Here is a 213-residue protein sequence, read N- to C-terminus: 3,4-dihydroxy-2-butanone 4-phosphate synthase (213 aa).

D-ribulose 5-phosphate contacts are provided by residues 37-38 (RE), D42, 150-154 (RPGHT), and E174. E38 serves as a coordination point for Mg(2+). H153 contributes to the Mg(2+) binding site.

This sequence belongs to the DHBP synthase family. In terms of assembly, homodimer. The cofactor is Mg(2+). It depends on Mn(2+) as a cofactor.

It carries out the reaction D-ribulose 5-phosphate = (2S)-2-hydroxy-3-oxobutyl phosphate + formate + H(+). Its pathway is cofactor biosynthesis; riboflavin biosynthesis; 2-hydroxy-3-oxobutyl phosphate from D-ribulose 5-phosphate: step 1/1. In terms of biological role, catalyzes the conversion of D-ribulose 5-phosphate to formate and 3,4-dihydroxy-2-butanone 4-phosphate. This is 3,4-dihydroxy-2-butanone 4-phosphate synthase from Clostridium botulinum (strain Langeland / NCTC 10281 / Type F).